The following is a 462-amino-acid chain: Elongation factor 1-alpha 1 (462 aa).

The residue at position 2 (Gly2) is a N,N,N-trimethylglycine. The tr-type G domain maps to 5-242; the sequence is KTHINIVVIG…DCILPPTRPT (238 aa). The G1 stretch occupies residues 14-21; the sequence is GHVDSGKS. Position 14 to 21 (14 to 21) interacts with GTP; it reads GHVDSGKS. Position 36 is an N6,N6,N6-trimethyllysine; alternate (Lys36). Lys36 carries the post-translational modification N6,N6-dimethyllysine; alternate. At Lys36 the chain carries N6-methyllysine; alternate. An N6,N6-dimethyllysine modification is found at Lys55. Positions 70–74 are G2; the sequence is GITID. Lys79 carries the N6,N6,N6-trimethyllysine; by EEF1AKMT1 modification. Residues 91–94 are G3; sequence DAPG. GTP is bound at residue 153–156; it reads NKMD. Residues 153–156 are G4; that stretch reads NKMD. Lys165 carries the post-translational modification N6,N6,N6-trimethyllysine; alternate; by EEF1AKMT3. N6,N6-dimethyllysine; alternate; by EEF1AKMT3 is present on Lys165. An N6-acetyllysine; alternate modification is found at Lys165. Position 165 is an N6-methyllysine; alternate; by EEF1AKMT3 (Lys165). At Lys172 the chain carries N6-acetyllysine. Residue 194–196 coordinates GTP; sequence SGW. The segment at 194–196 is G5; the sequence is SGW. Lys273 is subject to N6-acetyllysine. Ser300 bears the Phosphoserine; by TGFBR1 mark. Glu301 is subject to 5-glutamyl glycerylphosphorylethanolamine. Lys318 carries the N6,N6,N6-trimethyllysine; by EEF1AKMT2 modification. Glu374 is modified (5-glutamyl glycerylphosphorylethanolamine). Lys385 is covalently cross-linked (Glycyl lysine isopeptide (Lys-Gly) (interchain with G-Cter in ubiquitin)). Lys392 bears the N6-acetyllysine; alternate mark. Lys392 carries the post-translational modification N6-succinyllysine; alternate. Thr432 carries the phosphothreonine; by PASK modification. Residue Lys439 is modified to N6-acetyllysine.

It belongs to the TRAFAC class translation factor GTPase superfamily. Classic translation factor GTPase family. EF-Tu/EF-1A subfamily. Found in a nuclear export complex with XPO5, EEF1A1, Ran and aminoacylated tRNA. Interacts with PARP1 and TXK. Interacts with KARS1. May interact with ERGIC2. Interacts with IFIT1 (via TPR repeats 4-7). Interacts with DLC1, facilitating distribution to the membrane periphery and ruffles upon growth factor stimulation. Interacts with ZPR1; the interaction occurs in a epidermal growth factor (EGF)-dependent manner. Interacts with PPP1R16B. Interacts with SPHK1 and SPHK2; both interactions increase SPHK1 and SPHK2 kinase activity. Interacts with guanyl-nucleotide exchange factor EEF1B2. Interacts (via middle-region) with HTATIP2 (via N-terminus); the interaction is direct and competes with EEF1A1 binding to guanyl-nucleotide exchange factor EEF1B2, thereby inhibiting GDP for GTP exchange and reactivation of EEF1A1. Interacts with tRNA. In terms of processing, ISGylated. Phosphorylated by TXK. Phosphorylation by PASK increases translation efficiency. Phosphorylated by ROCK2. Phosphorylation by TGFBR1 inhibits translation elongation. Post-translationally, trimethylated at Lys-79 by EEF1AKMT1. Methylated at Lys-165 by EEF1AKMT3, methylation by EEF1AKMT3 is dynamic as well as inducible by stress conditions, such as ER-stress, and plays a regulatory role on mRNA translation. Trimethylated at Lys-318 by EEF1AKMT2. Mono-, di-, and trimethylated at Lys-36 by EEF1AKMT4; trimethylated form is predominant. Methylation by EEF1AKMT4 contributes to the fine-tuning of translation rates for a subset of tRNAs. Trimethylated at Gly-2 by METTL13. Mono- and dimethylated at Lys-55 by METTL13; dimethylated form is predominant. In terms of processing, ubiquitinated at Lys-385 by RNF14 in response to ribosome collisions (ribosome stalling), leading to its degradation by the proteasome and rescue of stalled ribosomes.

The protein localises to the cytoplasm. It is found in the nucleus. The protein resides in the nucleolus. It localises to the cell membrane. It carries out the reaction GTP + H2O = GDP + phosphate + H(+). Functionally, translation elongation factor that catalyzes the GTP-dependent binding of aminoacyl-tRNA (aa-tRNA) to the A-site of ribosomes during the elongation phase of protein synthesis. Base pairing between the mRNA codon and the aa-tRNA anticodon promotes GTP hydrolysis, releasing the aa-tRNA from EEF1A1 and allowing its accommodation into the ribosome. The growing protein chain is subsequently transferred from the P-site peptidyl tRNA to the A-site aa-tRNA, extending it by one amino acid through ribosome-catalyzed peptide bond formation. Also plays a role in the positive regulation of IFNG transcription in T-helper 1 cells as part of an IFNG promoter-binding complex with TXK and PARP1. Also plays a role in cytoskeleton organization by promoting actin bundling. This chain is Elongation factor 1-alpha 1 (EEF1A1), found in Cricetulus griseus (Chinese hamster).